A 733-amino-acid chain; its full sequence is Phosphoribosylformylglycinamidine synthase subunit PurL (733 aa).

His-44 is an active-site residue. ATP contacts are provided by Tyr-47 and Lys-86. Glu-88 is a Mg(2+) binding site. Residues 89 to 92 (SHNH) and Arg-111 contribute to the substrate site. His-90 acts as the Proton acceptor in catalysis. Asp-112 lines the Mg(2+) pocket. A substrate-binding site is contributed by Gln-233. Residue Asp-261 participates in Mg(2+) binding. 305-307 (ESQ) is a substrate binding site. 2 residues coordinate ATP: Asp-492 and Gly-529. Asn-530 provides a ligand contact to Mg(2+). Ser-532 serves as a coordination point for substrate.

The protein belongs to the FGAMS family. Monomer. Part of the FGAM synthase complex composed of 1 PurL, 1 PurQ and 2 PurS subunits.

It is found in the cytoplasm. It carries out the reaction N(2)-formyl-N(1)-(5-phospho-beta-D-ribosyl)glycinamide + L-glutamine + ATP + H2O = 2-formamido-N(1)-(5-O-phospho-beta-D-ribosyl)acetamidine + L-glutamate + ADP + phosphate + H(+). It functions in the pathway purine metabolism; IMP biosynthesis via de novo pathway; 5-amino-1-(5-phospho-D-ribosyl)imidazole from N(2)-formyl-N(1)-(5-phospho-D-ribosyl)glycinamide: step 1/2. Functionally, part of the phosphoribosylformylglycinamidine synthase complex involved in the purines biosynthetic pathway. Catalyzes the ATP-dependent conversion of formylglycinamide ribonucleotide (FGAR) and glutamine to yield formylglycinamidine ribonucleotide (FGAM) and glutamate. The FGAM synthase complex is composed of three subunits. PurQ produces an ammonia molecule by converting glutamine to glutamate. PurL transfers the ammonia molecule to FGAR to form FGAM in an ATP-dependent manner. PurS interacts with PurQ and PurL and is thought to assist in the transfer of the ammonia molecule from PurQ to PurL. The chain is Phosphoribosylformylglycinamidine synthase subunit PurL from Thermomicrobium roseum (strain ATCC 27502 / DSM 5159 / P-2).